The sequence spans 284 residues: Trimeric intracellular cation channel type B-B (284 aa).

The Lumenal portion of the chain corresponds to 1–15 (MESLSEVSVQFSQLS). The chain crosses the membrane as a helical span at residues 16-32 (MFPFFDMAHYLASVMSA). Topologically, residues 33-44 (REQAGALDIASH) are cytoplasmic. A helical transmembrane segment spans residues 45–68 (SPMASWFSAMLHCFGGGILSSILL). At 69 to 79 (AEPPVGILANT) the chain is on the lumenal side. The helical transmembrane segment at 80–99 (TNIMLASAIWYMVYYFPYDL) threads the bilayer. At 100 to 102 (FYN) the chain is on the cytoplasmic side. A helical membrane pass occupies residues 103–121 (CFFFLPIRLIAAGMKEVTR). Lysine 117 and arginine 121 together coordinate a 1,2-diacyl-sn-glycero-3-phospho-(1D-myo-inositol-4,5-bisphosphate). The Lumenal portion of the chain corresponds to 122–139 (TWKILSGITHAHSHYKDA). The chain crosses the membrane as a helical span at residues 140–157 (WLVMITIGWARGAGGGLI). Residues 158 to 178 (SNFEQLVRGVWKPESNEFLKM) lie on the Cytoplasmic side of the membrane. Residues 179–196 (SYPVKVTLIGAVLFTLQH) traverse the membrane as a helical segment. Topologically, residues 197 to 204 (GHYLPISR) are lumenal. The chain crosses the membrane as a helical span at residues 205 to 225 (HNLMFIYTMFLVSIKVTMMLT). The Cytoplasmic portion of the chain corresponds to 226–284 (HSAGSPFLPLETPLHRILFGLRQNQAEVRESPSSSGAKGKPSKKTLDKDSGEQSNKKDK). Positions 250 to 284 (QAEVRESPSSSGAKGKPSKKTLDKDSGEQSNKKDK) are disordered. The span at 269 to 284 (KTLDKDSGEQSNKKDK) shows a compositional bias: basic and acidic residues.

It belongs to the TMEM38 family. As to quaternary structure, homotrimer; conformation seems to be controled by binding to diacylglycerol (DAG).

It localises to the endoplasmic reticulum membrane. It catalyses the reaction K(+)(in) = K(+)(out). Its activity is regulated as follows. Channel activity is activated by increased cytosolic Ca(2+) levels and blocked by luminal high Ca(2+) levels. Functionally, intracellular monovalent cation channel required for maintenance of rapid intracellular calcium release. Acts as a potassium counter-ion channel that functions in synchronization with calcium release from intracellular stores. Activated by increased cytosolic Ca(2+) levels. The sequence is that of Trimeric intracellular cation channel type B-B (tmem38b-b) from Xenopus laevis (African clawed frog).